A 62-amino-acid polypeptide reads, in one-letter code: Large ribosomal subunit protein eL24 (62 aa).

Cys7, Cys10, Cys33, and Cys37 together coordinate Zn(2+). The segment at Cys7–Cys37 adopts a C4-type zinc-finger fold.

Belongs to the eukaryotic ribosomal protein eL24 family. In terms of assembly, part of the 50S ribosomal subunit. Forms a cluster with proteins L3 and L14. Requires Zn(2+) as cofactor.

Binds to the 23S rRNA. The polypeptide is Large ribosomal subunit protein eL24 (Halobacterium salinarum (strain ATCC 29341 / DSM 671 / R1)).